The primary structure comprises 319 residues: Acetyl-coenzyme A carboxylase carboxyl transferase subunit alpha (319 aa).

A CoA carboxyltransferase C-terminal domain is found at 35-296; that stretch reads NIDEEVHRLR…KAQLLEDLAD (262 aa).

This sequence belongs to the AccA family. In terms of assembly, acetyl-CoA carboxylase is a heterohexamer composed of biotin carboxyl carrier protein (AccB), biotin carboxylase (AccC) and two subunits each of ACCase subunit alpha (AccA) and ACCase subunit beta (AccD).

Its subcellular location is the cytoplasm. The enzyme catalyses N(6)-carboxybiotinyl-L-lysyl-[protein] + acetyl-CoA = N(6)-biotinyl-L-lysyl-[protein] + malonyl-CoA. The protein operates within lipid metabolism; malonyl-CoA biosynthesis; malonyl-CoA from acetyl-CoA: step 1/1. In terms of biological role, component of the acetyl coenzyme A carboxylase (ACC) complex. First, biotin carboxylase catalyzes the carboxylation of biotin on its carrier protein (BCCP) and then the CO(2) group is transferred by the carboxyltransferase to acetyl-CoA to form malonyl-CoA. This is Acetyl-coenzyme A carboxylase carboxyl transferase subunit alpha from Salmonella agona (strain SL483).